Consider the following 193-residue polypeptide: MIEITPIAQAHFKKLLEPQKEGTHIRVFVINPGTAKAECGVSYCPPEAVESSDTRLTFDGFDALIDEVSVPFLEDAFVDLVEEDAGTQLTLKAPNAKMRKVKDDAPLLERVEYVIQVQINPQLASHGGFIKLIEITEDNVAIIEFGGGCNGCSQVDLTLKQGVEKELIDEFSGELNAVRDITEHESGDHSFYK.

Cys149 and Cys152 together coordinate [4Fe-4S] cluster.

Belongs to the NfuA family. As to quaternary structure, homodimer. The cofactor is [4Fe-4S] cluster.

Functionally, involved in iron-sulfur cluster biogenesis. Binds a 4Fe-4S cluster, can transfer this cluster to apoproteins, and thereby intervenes in the maturation of Fe/S proteins. Could also act as a scaffold/chaperone for damaged Fe/S proteins. This chain is Fe/S biogenesis protein NfuA, found in Psychromonas ingrahamii (strain DSM 17664 / CCUG 51855 / 37).